A 266-amino-acid chain; its full sequence is Non-structural maintenance of chromosomes element 1 homolog (266 aa).

Residues 1 to 102 form an interaction with NSMCE3 region; the sequence is MQGSTRRMGV…SISKMATDFA (102 aa). The RING-type; atypical zinc-finger motif lies at 191 to 232; that stretch reads CNICHSLLIQGQSCETCGIRMHLPCVAKYFQSNAEPRCPHCN. The segment at 246–266 is disordered; it reads EKERESGVLKSNKKSLRSRQH. Ser251 is subject to Phosphoserine. The span at 256 to 266 shows a compositional bias: basic residues; sequence SNKKSLRSRQH.

This sequence belongs to the NSE1 family. As to quaternary structure, component of the SMC5-SMC6 complex which consists at least of SMC5, SMC6, NSMCE2, NSMCE1, NSMCE4A or EID3 and NSMCE3. NSMCE1, NSMCE4A or EID3 and NSMCE3 probably form a subcomplex that bridges the head domains of the SMC5-SMC6 heterodimer. Interacts with NSMCE3. Interacts with MAGEF1. In terms of processing, ubiquitinated.

It is found in the nucleus. The protein localises to the chromosome. The protein resides in the telomere. The catalysed reaction is S-ubiquitinyl-[E2 ubiquitin-conjugating enzyme]-L-cysteine + [acceptor protein]-L-lysine = [E2 ubiquitin-conjugating enzyme]-L-cysteine + N(6)-ubiquitinyl-[acceptor protein]-L-lysine.. Its function is as follows. RING-type zinc finger-containing E3 ubiquitin ligase that assembles with melanoma antigen protein (MAGE) to catalyze the direct transfer of ubiquitin from E2 ubiquitin-conjugating enzyme to a specific substrate. Within MAGE-RING ubiquitin ligase complex, MAGE stimulates and specifies ubiquitin ligase activity likely through recruitment and/or stabilization of the E2 ubiquitin-conjugating enzyme at the E3:substrate complex. Involved in maintenance of genome integrity, DNA damage response and DNA repair. NSMCE3/MAGEG1 and NSMCE1 ubiquitin ligase are components of SMC5-SMC6 complex and may positively regulate homologous recombination-mediated DNA repair. MAGEF1-NSMCE1 ubiquitin ligase promotes proteasomal degradation of MMS19, a key component of the cytosolic iron-sulfur protein assembly (CIA) machinery. Down-regulation of MMS19 impairs the activity of several DNA repair and metabolism enzymes such as ERCC2/XPD, FANCJ, RTEL1 and POLD1 that require iron-sulfur clusters as cofactors. This Homo sapiens (Human) protein is Non-structural maintenance of chromosomes element 1 homolog.